Here is a 305-residue protein sequence, read N- to C-terminus: tRNA dimethylallyltransferase (305 aa).

15 to 22 (GPTASGKS) is a binding site for ATP. 17–22 (TASGKS) lines the substrate pocket. 2 interaction with substrate tRNA regions span residues 40-43 (DSMQ) and 164-168 (QRIVR).

Belongs to the IPP transferase family. As to quaternary structure, monomer. Mg(2+) is required as a cofactor.

It catalyses the reaction adenosine(37) in tRNA + dimethylallyl diphosphate = N(6)-dimethylallyladenosine(37) in tRNA + diphosphate. In terms of biological role, catalyzes the transfer of a dimethylallyl group onto the adenine at position 37 in tRNAs that read codons beginning with uridine, leading to the formation of N6-(dimethylallyl)adenosine (i(6)A). This chain is tRNA dimethylallyltransferase, found in Sinorhizobium medicae (strain WSM419) (Ensifer medicae).